We begin with the raw amino-acid sequence, 355 residues long: MKIVADENLAFTDYFFSEFGDIQHKAGRTLTHTDVQDAEALLVRSVTAVNESLIQNTALKYVGSATIGTDHLDIQALEKHGITWANAAGCNAQAVAEYVITALLHLDASLLEQQEKFTLGIVGLGNVGKRLVYMAQLLGWKVIGFDPYVQLDSIENVSFQALLQQANAVSIHVPLTKKGEHATYHLFDEKAFAALQPNTILINSARGPVVKEAALIEDIQRTQRKVVLDVFEHEPVISEELLNMLALATPHIAGYSLEGKARGTQMIYEAFCQKFGYEINKRFETQLPACEDYFSGHDLKAVLKQKLSQIYDIAQDDANIRACVKEGKVEQKAFDLLRKNYPLRREWAAHGGPQA.

Ser45 and Thr66 together coordinate substrate. An NAD(+)-binding site is contributed by Asp146. Arg206 is an active-site residue. Asp229 is an NAD(+) binding site. The active site involves Glu234. Residue His251 is the Proton donor of the active site. NAD(+) is bound at residue Gly254. Position 255 (Tyr255) interacts with substrate.

This sequence belongs to the D-isomer specific 2-hydroxyacid dehydrogenase family. PdxB subfamily. As to quaternary structure, homodimer.

Its subcellular location is the cytoplasm. It catalyses the reaction 4-phospho-D-erythronate + NAD(+) = (R)-3-hydroxy-2-oxo-4-phosphooxybutanoate + NADH + H(+). The protein operates within cofactor biosynthesis; pyridoxine 5'-phosphate biosynthesis; pyridoxine 5'-phosphate from D-erythrose 4-phosphate: step 2/5. Its function is as follows. Catalyzes the oxidation of erythronate-4-phosphate to 3-hydroxy-2-oxo-4-phosphonooxybutanoate. This chain is Erythronate-4-phosphate dehydrogenase, found in Acinetobacter baumannii (strain AB307-0294).